We begin with the raw amino-acid sequence, 483 residues long: Probable gamma-aminobutyrate transaminase 4 (483 aa).

Residue 138–139 participates in pyridoxal 5'-phosphate binding; sequence GS. Residue tyrosine 171 coordinates substrate. Aspartate 278 contacts pyridoxal 5'-phosphate. A substrate-binding site is contributed by lysine 307. Position 307 is an N6-(pyridoxal phosphate)lysine (lysine 307).

This sequence belongs to the class-III pyridoxal-phosphate-dependent aminotransferase family. In terms of tissue distribution, not detected in roots, stems, flowers or leaves of healthy plants.

It is found in the cytoplasm. The enzyme catalyses 4-aminobutanoate + pyruvate = succinate semialdehyde + L-alanine. It catalyses the reaction 4-aminobutanoate + glyoxylate = succinate semialdehyde + glycine. Its function is as follows. Transaminase that degrades gamma-amino butyric acid (GABA). This is Probable gamma-aminobutyrate transaminase 4 (GABA-T) from Oryza sativa subsp. japonica (Rice).